Here is a 641-residue protein sequence, read N- to C-terminus: Protein zwilch (641 aa).

Ser312 is modified (phosphoserine).

The protein belongs to the ZWILCH family. As to quaternary structure, component of the RZZ complex composed of rod, Zw10 and Zwilch.

It is found in the cytoplasm. It localises to the chromosome. Its subcellular location is the centromere. The protein resides in the kinetochore. The protein localises to the cytoskeleton. It is found in the spindle. In terms of biological role, essential component of the mitotic checkpoint, which prevents cells from prematurely exiting mitosis. Required for the assembly of the dynein-dynactin, Mad2 complexes and spindly/CG15415 onto kinetochores. Its function related to the spindle assembly machinery is proposed to depend on its association in the RZZ complex. Failure to assemble the complex due to the absence of any one of its components, results in the incorrect redistribution of the remaining components to diverse membrane compartments. The polypeptide is Protein zwilch (Drosophila melanogaster (Fruit fly)).